Here is a 665-residue protein sequence, read N- to C-terminus: Succinate dehydrogenase [ubiquinone] flavoprotein subunit A, mitochondrial (665 aa).

The N-terminal 45 residues, 1–45, are a transit peptide targeting the mitochondrion; it reads MALLKVAPSRLLSRALQLASRVQNCTPTVTTARRNFHFTVYGRKD. Ala72, Ala75, Thr94, Lys95, and Ser101 together coordinate FAD. His102 carries the post-translational modification Tele-8alpha-FAD histidine. Positions 103, 108, 224, and 278 each coordinate FAD. Oxaloacetate is bound by residues His299, Arg343, and His410. Catalysis depends on Arg343, which acts as the Proton acceptor. Residue Glu443 participates in FAD binding. Residues Arg454 and Ala457 each coordinate oxaloacetate. FAD contacts are provided by Ser459 and Leu460.

Belongs to the FAD-dependent oxidoreductase 2 family. FRD/SDH subfamily. As to quaternary structure, component of complex II composed of four subunits: a flavoprotein (FP), an iron-sulfur protein (IP), and a cytochrome b composed of a large and a small subunit. It depends on FAD as a cofactor.

The protein resides in the mitochondrion inner membrane. It carries out the reaction a ubiquinone + succinate = a ubiquinol + fumarate. The enzyme catalyses (R)-malate + a quinone = enol-oxaloacetate + a quinol. It catalyses the reaction (S)-malate + a quinone = enol-oxaloacetate + a quinol. Its pathway is carbohydrate metabolism; tricarboxylic acid cycle; fumarate from succinate (eukaryal route): step 1/1. Enol-oxaloacetate inhibits the succinate dehydrogenase activity. In terms of biological role, flavoprotein (FP) subunit of succinate dehydrogenase (SDH) that is involved in complex II of the mitochondrial electron transport chain and is responsible for transferring electrons from succinate to ubiquinone (coenzyme Q). SDH also oxidizes malate to the non-canonical enol form of oxaloacetate, enol-oxaloacetate. Enol-oxaloacetate, which is a potent inhibitor of the succinate dehydrogenase activity, is further isomerized into keto-oxaloacetate. This chain is Succinate dehydrogenase [ubiquinone] flavoprotein subunit A, mitochondrial (sdha-a), found in Xenopus laevis (African clawed frog).